Reading from the N-terminus, the 238-residue chain is Ribonuclease PH (238 aa).

Residues R86 and 124–126 (GTR) contribute to the phosphate site.

It belongs to the RNase PH family. In terms of assembly, homohexameric ring arranged as a trimer of dimers.

The catalysed reaction is tRNA(n+1) + phosphate = tRNA(n) + a ribonucleoside 5'-diphosphate. Functionally, phosphorolytic 3'-5' exoribonuclease that plays an important role in tRNA 3'-end maturation. Removes nucleotide residues following the 3'-CCA terminus of tRNAs; can also add nucleotides to the ends of RNA molecules by using nucleoside diphosphates as substrates, but this may not be physiologically important. Probably plays a role in initiation of 16S rRNA degradation (leading to ribosome degradation) during starvation. This is Ribonuclease PH from Cupriavidus metallidurans (strain ATCC 43123 / DSM 2839 / NBRC 102507 / CH34) (Ralstonia metallidurans).